The primary structure comprises 243 residues: Ribosomal RNA small subunit methyltransferase J (243 aa).

S-adenosyl-L-methionine is bound by residues 112-113 and Asp164; that span reads ER.

It belongs to the methyltransferase superfamily. RsmJ family.

The protein localises to the cytoplasm. It carries out the reaction guanosine(1516) in 16S rRNA + S-adenosyl-L-methionine = N(2)-methylguanosine(1516) in 16S rRNA + S-adenosyl-L-homocysteine + H(+). Its function is as follows. Specifically methylates the guanosine in position 1516 of 16S rRNA. The protein is Ribosomal RNA small subunit methyltransferase J of Legionella pneumophila subsp. pneumophila (strain Philadelphia 1 / ATCC 33152 / DSM 7513).